The chain runs to 418 residues: Imidazolonepropionase (418 aa).

Fe(3+) is bound by residues His80 and His82. Residues His80 and His82 each contribute to the Zn(2+) site. The 4-imidazolone-5-propanoate site is built by Arg89, Tyr152, and His185. Tyr152 contributes to the N-formimidoyl-L-glutamate binding site. His250 provides a ligand contact to Fe(3+). His250 contributes to the Zn(2+) binding site. Gln253 contributes to the 4-imidazolone-5-propanoate binding site. Residue Asp325 coordinates Fe(3+). Asp325 serves as a coordination point for Zn(2+). The N-formimidoyl-L-glutamate site is built by Asn327 and Gly329. 4-imidazolone-5-propanoate is bound at residue Ser330.

It belongs to the metallo-dependent hydrolases superfamily. HutI family. Requires Zn(2+) as cofactor. The cofactor is Fe(3+).

The protein localises to the cytoplasm. The catalysed reaction is 4-imidazolone-5-propanoate + H2O = N-formimidoyl-L-glutamate. Its pathway is amino-acid degradation; L-histidine degradation into L-glutamate; N-formimidoyl-L-glutamate from L-histidine: step 3/3. In terms of biological role, catalyzes the hydrolytic cleavage of the carbon-nitrogen bond in imidazolone-5-propanoate to yield N-formimidoyl-L-glutamate. It is the third step in the universal histidine degradation pathway. In Solibacter usitatus (strain Ellin6076), this protein is Imidazolonepropionase.